Consider the following 220-residue polypeptide: Redox-sensing transcriptional repressor Rex (220 aa).

A DNA-binding region (H-T-H motif) is located at residues 17 to 56 (LYARSLRYLLQEGVESVSSQELGDRINVTAAQIRKDLSYF). 91–96 (GIGHLG) is an NAD(+) binding site.

The protein belongs to the transcriptional regulatory Rex family. In terms of assembly, homodimer.

It is found in the cytoplasm. Its function is as follows. Modulates transcription in response to changes in cellular NADH/NAD(+) redox state. In Roseiflexus sp. (strain RS-1), this protein is Redox-sensing transcriptional repressor Rex.